Reading from the N-terminus, the 445-residue chain is Proline--tRNA ligase (445 aa).

This sequence belongs to the class-II aminoacyl-tRNA synthetase family. ProS type 2 subfamily. As to quaternary structure, homodimer.

It localises to the cytoplasm. It catalyses the reaction tRNA(Pro) + L-proline + ATP = L-prolyl-tRNA(Pro) + AMP + diphosphate. Functionally, catalyzes the attachment of proline to tRNA(Pro) in a two-step reaction: proline is first activated by ATP to form Pro-AMP and then transferred to the acceptor end of tRNA(Pro). This chain is Proline--tRNA ligase, found in Dinoroseobacter shibae (strain DSM 16493 / NCIMB 14021 / DFL 12).